We begin with the raw amino-acid sequence, 263 residues long: H-2 class II histocompatibility antigen, A-K beta chain (263 aa).

The N-terminal stretch at 1–27 is a signal peptide; sequence MALQIPSLLLLAAVVVLTVLSSPGTEG. A beta-1 region spans residues 28–120; the sequence is GNSERHFVHQ…TETPTSLRRL (93 aa). The Extracellular portion of the chain corresponds to 28 to 224; sequence GNSERHFVHQ…RAQSESARSK (197 aa). Cystine bridges form between C42-C104 and C143-C199. N46 carries N-linked (GlcNAc...) asparagine glycosylation. Positions 121–214 are beta-2; that stretch reads EQPSVVISLS…SLKSPITVEW (94 aa). Residues 123-211 form the Ig-like C1-type domain; sequence PSVVISLSRT…EHPSLKSPIT (89 aa). The interval 215–224 is connecting peptide; that stretch reads RAQSESARSK. A helical transmembrane segment spans residues 225–245; sequence MLSGIGGCVLGVIFLGLGLFI. Residues 246 to 263 are Cytoplasmic-facing; sequence RHRSQKGPRGPPPAGLLQ.

The protein belongs to the MHC class II family. Ubiquitinated in immature dendritic cells leading to down-regulation of MHC class II.

It localises to the membrane. This Mus musculus (Mouse) protein is H-2 class II histocompatibility antigen, A-K beta chain (H2-Ab1).